We begin with the raw amino-acid sequence, 162 residues long: MSLVKLESSDEKVFEIEKEIACMSVTIKNMIEDIGESDSPIPLPNVTSTILEKVLDYCRHHHQHPSPQGDDKKDEKRLDDIPPYDRDFCKVDQPTLFELILAANYLDIKPLLDVTCKTVANMIRGKTPEEIRKIFNIKNDFTPEEEEQIRKENEWCEDKGGN.

S2 is subject to N-acetylserine. Residues I100 to N162 are interaction with the F-box domain of F-box proteins. At P143 the chain carries 4-hydroxyproline. P143 is a glycosylation site (O-linked (GlcNAc...) hydroxyproline).

It belongs to the SKP1 family. As to quaternary structure, multiprotein complex (SCF) with cullin and F-box-containing protein. Capable of undergoing aggregation. In terms of processing, O-linked glycan consists of linear Gal-Gal-Fuc-Gal-GlcNAc. FpaA and fpaB seem to be identically glycosylated. Glycosylation is required for nuclear enrichment. Post-translationally, hydroxylated by phyA.

The protein localises to the cytoplasm. It is found in the nucleus. The protein is SCF ubiquitin ligase complex protein SKP1a (fpaA) of Dictyostelium discoideum (Social amoeba).